We begin with the raw amino-acid sequence, 163 residues long: MASTFSFDIVSDFDRQELVNAVDQVIRDIKGRYDLKDTETTVELVEESINVSTDSEFTLDSVHTILREKAAKRNLSQKIFDFGKVESASGNRVRQEIKLKKGISQEIAKQISKLIRDEFKKVQASIQGDAVRVSAKSKDDLQVVMQRLKQEDYPVALQFTNYR.

This sequence belongs to the YajQ family.

Nucleotide-binding protein. In Nostoc punctiforme (strain ATCC 29133 / PCC 73102), this protein is Nucleotide-binding protein Npun_R4736.